The following is a 225-amino-acid chain: Rho GDP-dissociation inhibitor 3 (225 aa).

This sequence belongs to the Rho GDI family. Detected only in brain, lung, kidney and testis.

Its subcellular location is the cytoplasm. In terms of biological role, inhibits GDP/GTP exchange reaction of RhoB. Interacts specifically with the GDP- and GTP-bound forms of post-translationally processed Rhob and Rhog proteins, both of which show a growth-regulated expression in mammalian cells. Stimulates the release of the GDP-bound but not the GTP-bound RhoB protein. Also inhibits the GDP/GTP exchange of RhoB but shows less ability to inhibit the dissociation of prebound GTP. The sequence is that of Rho GDP-dissociation inhibitor 3 (Arhgdig) from Mus musculus (Mouse).